A 317-amino-acid polypeptide reads, in one-letter code: Ribonuclease Z (317 aa).

The Zn(2+) site is built by His-61, His-63, Asp-65, His-66, His-153, Asp-221, and His-280. Asp-65 (proton acceptor) is an active-site residue.

Belongs to the RNase Z family. As to quaternary structure, homodimer. Requires Zn(2+) as cofactor.

It carries out the reaction Endonucleolytic cleavage of RNA, removing extra 3' nucleotides from tRNA precursor, generating 3' termini of tRNAs. A 3'-hydroxy group is left at the tRNA terminus and a 5'-phosphoryl group is left at the trailer molecule.. Functionally, zinc phosphodiesterase, which displays some tRNA 3'-processing endonuclease activity. Probably involved in tRNA maturation, by removing a 3'-trailer from precursor tRNA. The protein is Ribonuclease Z of Alkaliphilus oremlandii (strain OhILAs) (Clostridium oremlandii (strain OhILAs)).